The following is a 379-amino-acid chain: Queuine tRNA-ribosyltransferase (379 aa).

D94 serves as the catalytic Proton acceptor. Residues 94-98 (DSGGF), D148, Q191, and G218 contribute to the substrate site. The tract at residues 249-255 (GVGSPDA) is RNA binding. The active-site Nucleophile is D268. The segment at 273-277 (TRIAR) is RNA binding; important for wobble base 34 recognition. 4 residues coordinate Zn(2+): C306, C308, C311, and H337.

The protein belongs to the queuine tRNA-ribosyltransferase family. As to quaternary structure, homodimer. Within each dimer, one monomer is responsible for RNA recognition and catalysis, while the other monomer binds to the replacement base PreQ1. The cofactor is Zn(2+).

It catalyses the reaction 7-aminomethyl-7-carbaguanine + guanosine(34) in tRNA = 7-aminomethyl-7-carbaguanosine(34) in tRNA + guanine. The protein operates within tRNA modification; tRNA-queuosine biosynthesis. Functionally, catalyzes the base-exchange of a guanine (G) residue with the queuine precursor 7-aminomethyl-7-deazaguanine (PreQ1) at position 34 (anticodon wobble position) in tRNAs with GU(N) anticodons (tRNA-Asp, -Asn, -His and -Tyr). Catalysis occurs through a double-displacement mechanism. The nucleophile active site attacks the C1' of nucleotide 34 to detach the guanine base from the RNA, forming a covalent enzyme-RNA intermediate. The proton acceptor active site deprotonates the incoming PreQ1, allowing a nucleophilic attack on the C1' of the ribose to form the product. After dissociation, two additional enzymatic reactions on the tRNA convert PreQ1 to queuine (Q), resulting in the hypermodified nucleoside queuosine (7-(((4,5-cis-dihydroxy-2-cyclopenten-1-yl)amino)methyl)-7-deazaguanosine). The protein is Queuine tRNA-ribosyltransferase of Staphylococcus aureus (strain bovine RF122 / ET3-1).